A 386-amino-acid chain; its full sequence is 3-ketoacyl-CoA thiolase (386 aa).

The active-site Acyl-thioester intermediate is cysteine 91. Active-site proton acceptor residues include histidine 342 and cysteine 372.

Belongs to the thiolase-like superfamily. Thiolase family. In terms of assembly, heterotetramer of two alpha chains (FadB) and two beta chains (FadA).

It is found in the cytoplasm. The catalysed reaction is an acyl-CoA + acetyl-CoA = a 3-oxoacyl-CoA + CoA. It participates in lipid metabolism; fatty acid beta-oxidation. Functionally, catalyzes the final step of fatty acid oxidation in which acetyl-CoA is released and the CoA ester of a fatty acid two carbons shorter is formed. This Pseudoalteromonas atlantica (strain T6c / ATCC BAA-1087) protein is 3-ketoacyl-CoA thiolase.